Consider the following 318-residue polypeptide: Protein FdhE homolog (318 aa).

This sequence belongs to the FdhE family.

The protein resides in the cytoplasm. Necessary for formate dehydrogenase activity. The polypeptide is Protein FdhE homolog (Pseudomonas putida (strain ATCC 47054 / DSM 6125 / CFBP 8728 / NCIMB 11950 / KT2440)).